We begin with the raw amino-acid sequence, 309 residues long: NAD kinase (309 aa).

D89 functions as the Proton acceptor in the catalytic mechanism. NAD(+) is bound by residues 89–90 (DG), 163–164 (NE), H174, R191, D193, and 204–209 (TAYALS).

This sequence belongs to the NAD kinase family. A divalent metal cation serves as cofactor.

It is found in the cytoplasm. It catalyses the reaction NAD(+) + ATP = ADP + NADP(+) + H(+). Its function is as follows. Involved in the regulation of the intracellular balance of NAD and NADP, and is a key enzyme in the biosynthesis of NADP. Catalyzes specifically the phosphorylation on 2'-hydroxyl of the adenosine moiety of NAD to yield NADP. This chain is NAD kinase, found in Shewanella baltica (strain OS155 / ATCC BAA-1091).